The following is a 364-amino-acid chain: Dual-specificity RNA methyltransferase RlmN (364 aa).

The active-site Proton acceptor is Glu-91. The Radical SAM core domain maps to 97 to 333 (ESDRGTLCIS…VTVRKTRGDD (237 aa)). A disulfide bond links Cys-104 and Cys-338. [4Fe-4S] cluster contacts are provided by Cys-111, Cys-115, and Cys-118. Residues 164 to 165 (GE), Ser-196, 218 to 220 (SLH), and Asn-295 each bind S-adenosyl-L-methionine. The active-site S-methylcysteine intermediate is the Cys-338.

The protein belongs to the radical SAM superfamily. RlmN family. [4Fe-4S] cluster is required as a cofactor.

The protein resides in the cytoplasm. It catalyses the reaction adenosine(2503) in 23S rRNA + 2 reduced [2Fe-2S]-[ferredoxin] + 2 S-adenosyl-L-methionine = 2-methyladenosine(2503) in 23S rRNA + 5'-deoxyadenosine + L-methionine + 2 oxidized [2Fe-2S]-[ferredoxin] + S-adenosyl-L-homocysteine. The catalysed reaction is adenosine(37) in tRNA + 2 reduced [2Fe-2S]-[ferredoxin] + 2 S-adenosyl-L-methionine = 2-methyladenosine(37) in tRNA + 5'-deoxyadenosine + L-methionine + 2 oxidized [2Fe-2S]-[ferredoxin] + S-adenosyl-L-homocysteine. Its function is as follows. Specifically methylates position 2 of adenine 2503 in 23S rRNA and position 2 of adenine 37 in tRNAs. m2A2503 modification seems to play a crucial role in the proofreading step occurring at the peptidyl transferase center and thus would serve to optimize ribosomal fidelity. This chain is Dual-specificity RNA methyltransferase RlmN, found in Neisseria meningitidis serogroup C (strain 053442).